Consider the following 688-residue polypeptide: UvrABC system protein C (688 aa).

Positions 1 to 14 are enriched in basic and acidic residues; it reads MSPLDQKNKPRGGA. Residues 1 to 20 form a disordered region; it reads MSPLDQKNKPRGGADDLPPE. A GIY-YIG domain is found at 71-149; the sequence is NAPGVYRMMN…IKRLRPRFNV (79 aa). In terms of domain architecture, UVR spans 259 to 294; that stretch reads QKVKTEISAAMQQASEDLDFERAAIYRDRLAALSHV.

The protein belongs to the UvrC family. Interacts with UvrB in an incision complex.

The protein localises to the cytoplasm. In terms of biological role, the UvrABC repair system catalyzes the recognition and processing of DNA lesions. UvrC both incises the 5' and 3' sides of the lesion. The N-terminal half is responsible for the 3' incision and the C-terminal half is responsible for the 5' incision. The chain is UvrABC system protein C from Mesorhizobium japonicum (strain LMG 29417 / CECT 9101 / MAFF 303099) (Mesorhizobium loti (strain MAFF 303099)).